We begin with the raw amino-acid sequence, 450 residues long: Caspase Dronc (450 aa).

A propeptide spanning residues 1 to 134 is cleaved from the precursor; sequence MQPPELEIGM…RTSRKSADIV (134 aa). One can recognise a CARD domain in the interval 64–109; the sequence is EKDVRVEQHRRLLLKITQRGPTAYNLLINALRNINCLDAAVLLESV. The segment at 114 to 125 is required for binding Diap1; the sequence is SRPPFISLNERR. Active-site residues include His271 and Cys318. Residues 321-324 constitute a propeptide that is removed on maturation; the sequence is DEYD.

The protein belongs to the peptidase C14A family. Interacts (via residues 114-125) with Diap1 (via BIR 2 domain); binding blocks Dronc-mediated cell death. Can form a stable complex with Drice. Rpr, hid and grim can out-compete Dronc for binding Diap1, therefore removing Diap1-mediated ubiquitination. Interacts (via CARD domain) with Dark (via Dark CARD and WD domains); the interaction stimulates Dark oligomerization to form the apoptosome and brings pairs of Dronc molecules together on the apoptosome to facilitate their dimerization and activation by autocatalytic cleavage. Binding to Dark stimulates apoptosome assembly. After autocatalytic cleavage the Dronc caspase domain dissociates from the apoptosome but the CARD domain remains associated. In terms of processing, ubiquitinated by Diap1, leading to its subsequent degradation. Ubiquitously expressed in embryos during early stages of development. In late third instar larvae, dramatic up-regulation in salivary glands and midgut before histolysis of these tissues.

It is found in the cytoplasm. It catalyses the reaction Strict requirement for an Asp residue at position P1 and with a marked preference for His at position P2. It has a preferred cleavage sequence of Leu-Gly-His-Asp-|-Xaa.. With respect to regulation, zymogen activated by autocatalytic cleavage; association with the Dark apoptosome brings multiple molecules together to facilitate their dimerization and activation by autocatalytic cleavage. Its function is as follows. Involved in the activation cascade of caspases responsible for apoptosis execution. Effector of steroid-mediated apoptosis during insect metamorphosis. Overexpression promotes programmed cell death. Interaction with Diap1 is required to suppress Dronc-mediated cell death; via Diap1-mediated ubiquitination of Dronc. Rate-limiting caspase in rpr, grim and hid death pathway. Recruited to the Dark apoptosome, an adapter protein complex that mediates activation of the caspase cascade in programmed cell death initiated by the intrinsic apoptosis pathway. Association with the Dark apoptosome stimulates autocatalytic cleavage and activation of Dronc, promoting Dronc-mediated cleavage of downstream effector caspases such as Drice. This Drosophila melanogaster (Fruit fly) protein is Caspase Dronc.